The sequence spans 280 residues: ATP synthase gamma chain (280 aa).

It belongs to the ATPase gamma chain family. In terms of assembly, F-type ATPases have 2 components, CF(1) - the catalytic core - and CF(0) - the membrane proton channel. CF(1) has five subunits: alpha(3), beta(3), gamma(1), delta(1), epsilon(1). CF(0) has three main subunits: a, b and c.

The protein localises to the cell membrane. Produces ATP from ADP in the presence of a proton gradient across the membrane. The gamma chain is believed to be important in regulating ATPase activity and the flow of protons through the CF(0) complex. This is ATP synthase gamma chain from Mycoplasma capricolum subsp. capricolum (strain California kid / ATCC 27343 / NCTC 10154).